The following is a 223-amino-acid chain: Ribose-5-phosphate isomerase A (223 aa).

Substrate contacts are provided by residues 29-32 (TGST), 82-85 (DGAD), and 95-98 (KGGG). Glu-104 serves as the catalytic Proton acceptor. Lys-122 provides a ligand contact to substrate.

This sequence belongs to the ribose 5-phosphate isomerase family. As to quaternary structure, homodimer.

The catalysed reaction is aldehydo-D-ribose 5-phosphate = D-ribulose 5-phosphate. The protein operates within carbohydrate degradation; pentose phosphate pathway; D-ribose 5-phosphate from D-ribulose 5-phosphate (non-oxidative stage): step 1/1. Catalyzes the reversible conversion of ribose-5-phosphate to ribulose 5-phosphate. This Neisseria meningitidis serogroup C / serotype 2a (strain ATCC 700532 / DSM 15464 / FAM18) protein is Ribose-5-phosphate isomerase A.